Consider the following 68-residue polypeptide: Large ribosomal subunit protein bL35 (68 aa).

It belongs to the bacterial ribosomal protein bL35 family.

In Rickettsia canadensis (strain McKiel), this protein is Large ribosomal subunit protein bL35.